The sequence spans 127 residues: Large ribosomal subunit protein bL12 (127 aa).

Belongs to the bacterial ribosomal protein bL12 family. As to quaternary structure, homodimer. Part of the ribosomal stalk of the 50S ribosomal subunit. Forms a multimeric L10(L12)X complex, where L10 forms an elongated spine to which 2 to 4 L12 dimers bind in a sequential fashion. Binds GTP-bound translation factors.

In terms of biological role, forms part of the ribosomal stalk which helps the ribosome interact with GTP-bound translation factors. Is thus essential for accurate translation. The chain is Large ribosomal subunit protein bL12 from Chloroherpeton thalassium (strain ATCC 35110 / GB-78).